Here is a 192-residue protein sequence, read N- to C-terminus: Adenylate kinase (192 aa).

ATP is bound at residue 10 to 18; the sequence is GVPGVGGTT.

The protein belongs to the archaeal adenylate kinase family. Monomer.

It is found in the cytoplasm. The enzyme catalyses AMP + ATP = 2 ADP. The polypeptide is Adenylate kinase (Methanococcus maripaludis (strain C5 / ATCC BAA-1333)).